Reading from the N-terminus, the 127-residue chain is UPF0389 protein GA21628 (127 aa).

Residues isoleucine 69 to tyrosine 88 form a helical membrane-spanning segment.

The protein belongs to the UPF0389 family.

Its subcellular location is the membrane. The sequence is that of UPF0389 protein GA21628 from Drosophila pseudoobscura pseudoobscura (Fruit fly).